Reading from the N-terminus, the 156-residue chain is Small ribosomal subunit protein uS7 (156 aa).

It belongs to the universal ribosomal protein uS7 family. As to quaternary structure, part of the 30S ribosomal subunit. Contacts proteins S9 and S11.

Its function is as follows. One of the primary rRNA binding proteins, it binds directly to 16S rRNA where it nucleates assembly of the head domain of the 30S subunit. Is located at the subunit interface close to the decoding center, probably blocks exit of the E-site tRNA. In Streptococcus gordonii (strain Challis / ATCC 35105 / BCRC 15272 / CH1 / DL1 / V288), this protein is Small ribosomal subunit protein uS7.